We begin with the raw amino-acid sequence, 274 residues long: Dermonecrotic toxin SdSicTox-betaIIB1bv (274 aa).

Residue His5 is part of the active site. The Mg(2+) site is built by Glu25 and Asp27. The active-site Nucleophile is the His41. Disulfide bonds link Cys45–Cys51 and Cys47–Cys190. A Mg(2+)-binding site is contributed by Asp85.

The protein belongs to the arthropod phospholipase D family. Class II subfamily. The cofactor is Mg(2+). In terms of tissue distribution, expressed by the venom gland.

It is found in the secreted. The catalysed reaction is an N-(acyl)-sphingosylphosphocholine = an N-(acyl)-sphingosyl-1,3-cyclic phosphate + choline. It catalyses the reaction an N-(acyl)-sphingosylphosphoethanolamine = an N-(acyl)-sphingosyl-1,3-cyclic phosphate + ethanolamine. It carries out the reaction a 1-acyl-sn-glycero-3-phosphocholine = a 1-acyl-sn-glycero-2,3-cyclic phosphate + choline. The enzyme catalyses a 1-acyl-sn-glycero-3-phosphoethanolamine = a 1-acyl-sn-glycero-2,3-cyclic phosphate + ethanolamine. Functionally, dermonecrotic toxins cleave the phosphodiester linkage between the phosphate and headgroup of certain phospholipids (sphingolipid and lysolipid substrates), forming an alcohol (often choline) and a cyclic phosphate. This toxin acts on sphingomyelin (SM). It may also act on ceramide phosphoethanolamine (CPE), lysophosphatidylcholine (LPC) and lysophosphatidylethanolamine (LPE), but not on lysophosphatidylserine (LPS), and lysophosphatidylglycerol (LPG). It acts by transphosphatidylation, releasing exclusively cyclic phosphate products as second products. Induces dermonecrosis, hemolysis, increased vascular permeability, edema, inflammatory response, and platelet aggregation. The polypeptide is Dermonecrotic toxin SdSicTox-betaIIB1bv (Sicarius cf. damarensis (strain GJB-2008) (Six-eyed sand spider)).